Here is a 379-residue protein sequence, read N- to C-terminus: ATP phosphoribosyltransferase regulatory subunit (379 aa).

The protein belongs to the class-II aminoacyl-tRNA synthetase family. HisZ subfamily. As to quaternary structure, heteromultimer composed of HisG and HisZ subunits.

Its subcellular location is the cytoplasm. It participates in amino-acid biosynthesis; L-histidine biosynthesis; L-histidine from 5-phospho-alpha-D-ribose 1-diphosphate: step 1/9. In terms of biological role, required for the first step of histidine biosynthesis. May allow the feedback regulation of ATP phosphoribosyltransferase activity by histidine. The chain is ATP phosphoribosyltransferase regulatory subunit from Paramagnetospirillum magneticum (strain ATCC 700264 / AMB-1) (Magnetospirillum magneticum).